Consider the following 743-residue polypeptide: 1,4-alpha-glucan branching enzyme GlgB 2 (743 aa).

The interval 1–23 is disordered; the sequence is MSERQGGQEQRTEADGMTTEGIS. Aspartate 422 acts as the Nucleophile in catalysis. The Proton donor role is filled by glutamate 475.

The protein belongs to the glycosyl hydrolase 13 family. GlgB subfamily. In terms of assembly, monomer.

It catalyses the reaction Transfers a segment of a (1-&gt;4)-alpha-D-glucan chain to a primary hydroxy group in a similar glucan chain.. It participates in glycan biosynthesis; glycogen biosynthesis. Functionally, catalyzes the formation of the alpha-1,6-glucosidic linkages in glycogen by scission of a 1,4-alpha-linked oligosaccharide from growing alpha-1,4-glucan chains and the subsequent attachment of the oligosaccharide to the alpha-1,6 position. This Xanthomonas euvesicatoria pv. vesicatoria (strain 85-10) (Xanthomonas campestris pv. vesicatoria) protein is 1,4-alpha-glucan branching enzyme GlgB 2.